The sequence spans 258 residues: 4,5-dihydroxyphthalate decarboxylase (258 aa).

It to P.testosteroni DHP decarboxylase.

The catalysed reaction is 4,5-dihydroxyphthalate + H(+) = 3,4-dihydroxybenzoate + CO2. It functions in the pathway xenobiotic degradation; phthalate degradation; 3,4-dihydroxybenzoate from phthalate: step 3/3. This Pseudomonas putida (Arthrobacter siderocapsulatus) protein is 4,5-dihydroxyphthalate decarboxylase (pht5).